Here is an 859-residue protein sequence, read N- to C-terminus: Probable helicase A859L (859 aa).

The 172-residue stretch at 178–349 (YQELRRSGRA…KNRELFGGVA (172 aa)) folds into the Helicase ATP-binding domain. Position 191-198 (191-198 (MACRCGKT)) interacts with ATP. The short motif at 298–301 (DECH) is the DEAH box element. A Helicase C-terminal domain is found at 401–553 (HLKTNITAPK…RFYEHLLNPS (153 aa)).

It belongs to the asfivirus helicase A859L family.

This chain is Probable helicase A859L, found in African swine fever virus (isolate Tick/South Africa/Pretoriuskop Pr4/1996) (ASFV).